The chain runs to 186 residues: Peptidyl-tRNA hydrolase (186 aa).

Tyrosine 16 contacts tRNA. Catalysis depends on histidine 21, which acts as the Proton acceptor. Residues tyrosine 60 and asparagine 62 each contribute to the tRNA site.

The protein belongs to the PTH family. Monomer.

The protein resides in the cytoplasm. The enzyme catalyses an N-acyl-L-alpha-aminoacyl-tRNA + H2O = an N-acyl-L-amino acid + a tRNA + H(+). Functionally, hydrolyzes ribosome-free peptidyl-tRNAs (with 1 or more amino acids incorporated), which drop off the ribosome during protein synthesis, or as a result of ribosome stalling. Catalyzes the release of premature peptidyl moieties from peptidyl-tRNA molecules trapped in stalled 50S ribosomal subunits, and thus maintains levels of free tRNAs and 50S ribosomes. This chain is Peptidyl-tRNA hydrolase, found in Tropheryma whipplei (strain TW08/27) (Whipple's bacillus).